Reading from the N-terminus, the 94-residue chain is Translation initiation factor 1A 2 (94 aa).

The S1-like domain occupies 6 to 80 (GRRNLRMPSD…EKANIEWRYS (75 aa)).

The protein belongs to the eIF-1A family.

In terms of biological role, seems to be required for maximal rate of protein biosynthesis. Enhances ribosome dissociation into subunits and stabilizes the binding of the initiator Met-tRNA(I) to 40 S ribosomal subunits. This is Translation initiation factor 1A 2 from Haloquadratum walsbyi (strain DSM 16790 / HBSQ001).